Here is a 105-residue protein sequence, read N- to C-terminus: Signal peptidase complex subunit 1 (105 aa).

At 1-32 (MDGMIAMLPAPLQKLSSHIDFQGQKVAERTYQ) the chain is on the cytoplasmic side. Residues 33-53 (VILTIAGIIGFLVGFWTQQLS) form a helical membrane-spanning segment. Residues 54–56 (YAM) are Lumenal-facing. The helical transmembrane segment at 57–77 (FTVLGASAFTALIILPPWPFL) threads the bilayer. Topologically, residues 78–105 (FRKNPIVWHTPAEPQESGDKKKETKKTK) are cytoplasmic.

The protein belongs to the SPCS1 family. In terms of assembly, component of the signal peptidase complex (SPC) composed of a catalytic subunit sec-11 and three accessory subunits spcs-1, spcs-2 and spcs-3. The complex induces a local thinning of the ER membrane which is used to measure the length of the signal peptide (SP) h-region of protein substrates. This ensures the selectivity of the complex towards h-regions shorter than 18-20 amino acids.

The protein localises to the endoplasmic reticulum membrane. Component of the signal peptidase complex (SPC) which catalyzes the cleavage of N-terminal signal sequences from nascent proteins as they are translocated into the lumen of the endoplasmic reticulum. Dispensable for SPC enzymatic activity. This chain is Signal peptidase complex subunit 1, found in Caenorhabditis elegans.